Consider the following 1119-residue polypeptide: Nuclear matrix constituent protein 1 (1119 aa).

Coiled-coil stretches lie at residues 140 to 226 and 328 to 488; these read LAEL…LYQQ and LQNR…LDER. 4 disordered regions span residues 846–884, 903–974, 989–1015, and 1046–1109; these read LDVE…AEEA, LASA…PTGR, NGAL…EIPD, and GINA…EVSM. Composition is skewed to basic residues over residues 859 to 876 and 920 to 929; these read GNRK…RKRS and KRTRNSRKRN. The segment covering 1075 to 1085 has biased composition (polar residues); it reads TPEQSRGYQNQ.

Belongs to the CRWN family.

The protein localises to the nucleus matrix. It localises to the nucleus lamina. Functionally, architectural component of nuclear structure that plays different roles in controlling nuclear size and morphology. This Daucus carota subsp. sativus (Carrot) protein is Nuclear matrix constituent protein 1.